The chain runs to 378 residues: MMKSIRFLASALALCLVDAYLVTPPGTPAPGAASACSAWVQASYGLTCDIIHRFYGMTAAEFEEWVSKCPAAQLYPLNYICTDSAKNPSVSQLGDGCTLISGLYYCVQVNYITQSPTWTPPTTTTRSTSSSAGNGVTTPTPTQTGMVSSCNRFYLVVSGDSCYDIAAAQGISLDNFYTWNPAVGSSCGGLWPDYYVCVGVISDGTTTTTTTTTTPTTTSTTTTTAGNGVTTPTPIQTGMVTNCNKFYQVVSGDGCYDIAAAAGIALNDFYTWNPAVGNTCAGLWPDYYVCVGIIGSSGTTTTKTTTTTTSGNGVATPTPTQSGMVSNCKKFYLVVSGDGCYDIAAAAGIALSDFYAWNPAVGDTCAGLWPNYYVCVGI.

Positions Met1–Ala19 are cleaved as a signal peptide. Positions Trp118 to Ser131 are enriched in low complexity. Residues Trp118–Pro139 form a disordered region. Positions Arg152–Val198 constitute a LysM 1 domain. The segment at Thr208 to Thr230 is disordered. 2 LysM domains span residues Lys245–Val291 and Lys330–Val376.

Belongs to the secreted LysM effector family.

It is found in the secreted. The protein resides in the cell wall. Its subcellular location is the extracellular space. It localises to the extracellular matrix. Functionally, cell wall chitin of A.fumigatus recruits lung eosinophils during infection and ldpA might have a role in sequestration of chitin and act as triggers of host immunity to dampen host defense. The chain is Secreted LysM effector ldpA from Aspergillus fumigatus (strain ATCC MYA-4609 / CBS 101355 / FGSC A1100 / Af293) (Neosartorya fumigata).